The following is a 288-amino-acid chain: Coiled-coil domain-containing protein 190 (288 aa).

Positions 16–69 (LERKSARQAEARLSLRLQRLEIICLYHVKSLAREQRQLQKELQRLQQDIIKKRF) form a coiled coil. Residues 141–235 (GERTSCFKEG…SSVDYAGSFK (95 aa)) form a disordered region. Positions 177 to 188 (HDQELSTNKTED) are enriched in basic and acidic residues. The span at 203 to 213 (ANETRSENASQ) shows a compositional bias: polar residues.

In Mus musculus (Mouse), this protein is Coiled-coil domain-containing protein 190 (Ccdc190).